Reading from the N-terminus, the 363-residue chain is Chalcone synthase B (363 aa).

Residue cysteine 170 is part of the active site.

It belongs to the thiolase-like superfamily. Chalcone/stilbene synthases family.

The catalysed reaction is (E)-4-coumaroyl-CoA + 3 malonyl-CoA + 3 H(+) = 2',4,4',6'-tetrahydroxychalcone + 3 CO2 + 4 CoA. It participates in secondary metabolite biosynthesis; flavonoid biosynthesis. The primary product of this enzyme is 4,2',4',6'-tetrahydroxychalcone (also termed naringenin-chalcone or chalcone) which can under specific conditions spontaneously isomerize into naringenin. In Ipomoea cordatotriloba (Tievine), this protein is Chalcone synthase B (CHSB).